The following is a 310-amino-acid chain: Altered inheritance of mitochondria protein 46, mitochondrial (310 aa).

A mitochondrion-targeting transit peptide spans 1–20 (MRLISKVLVKTNCLEVGMRR).

Belongs to the AIM18/AIM46 family.

The protein resides in the mitochondrion. The sequence is that of Altered inheritance of mitochondria protein 46, mitochondrial (AIM46) from Saccharomyces cerevisiae (strain YJM789) (Baker's yeast).